A 404-amino-acid polypeptide reads, in one-letter code: Ubiquitin-like modifier-activating enzyme 5 (404 aa).

A Phosphoserine modification is found at S45. Residues G83, D104, K127, N150, and N184 each contribute to the ATP site. Zn(2+) is bound by residues C226 and C229. The Glycyl thioester intermediate role is filled by C250. The Zn(2+) site is built by C303 and C308. Positions 334-346 (IIHEDNEWGIELV) match the UFM1-interacting sequence (UIS) motif. Residues 347–377 (SEVSEEELKNFSGPVPDLPEGITVAYTIPKK) are linker. 2 positions are modified to phosphoserine: S358 and S393. Positions 389–404 (DSGESLEDLMAKMKNM) match the UFC1-binding sequence (UFC) motif.

This sequence belongs to the ubiquitin-activating E1 family. UBA5 subfamily. As to quaternary structure, homodimer; homodimerization is required for UFM1 activation. Interacts (via UIS motif) with UFM1; binds UFM1 via a trans-binding mechanism in which UFM1 interacts with distinct sites in both subunits of the UBA5 homodimer. Interacts (via C-terminus) with UFC1. Interacts (via UIS motif) with GABARAPL2 and, with lower affinity, with GABARAP and GABARAPL1. As to expression, widely expressed.

The protein resides in the cytoplasm. The protein localises to the nucleus. It is found in the endoplasmic reticulum membrane. Its subcellular location is the golgi apparatus. Its function is as follows. E1-like enzyme which specifically catalyzes the first step in ufmylation. Activates UFM1 by first adenylating its C-terminal glycine residue with ATP, and thereafter linking this residue to the side chain of a cysteine residue in E1, yielding a UFM1-E1 thioester and free AMP. Activates UFM1 via a trans-binding mechanism, in which UFM1 interacts with distinct sites in both subunits of the UBA5 homodimer. Trans-binding also promotes stabilization of the UBA5 homodimer, and enhances ATP-binding. Transfer of UFM1 from UBA5 to the E2-like enzyme UFC1 also takes place using a trans mechanism. Ufmylation plays a key role in various processes, such as ribosome recycling, response to DNA damage, interferon response or reticulophagy (also called ER-phagy). Ufmylation is essential for erythroid differentiation of both megakaryocytes and erythrocytes. The polypeptide is Ubiquitin-like modifier-activating enzyme 5 (Homo sapiens (Human)).